We begin with the raw amino-acid sequence, 349 residues long: Anthranilate phosphoribosyltransferase (349 aa).

5-phospho-alpha-D-ribose 1-diphosphate is bound by residues Gly-84, 87–88 (GD), Thr-92, 94–97 (NIST), 112–120 (KHGNRAASS), and Ser-124. Gly-84 is a binding site for anthranilate. Ser-96 serves as a coordination point for Mg(2+). Position 115 (Asn-115) interacts with anthranilate. Arg-170 contributes to the anthranilate binding site. 2 residues coordinate Mg(2+): Asp-228 and Glu-229.

The protein belongs to the anthranilate phosphoribosyltransferase family. As to quaternary structure, homodimer. It depends on Mg(2+) as a cofactor.

The catalysed reaction is N-(5-phospho-beta-D-ribosyl)anthranilate + diphosphate = 5-phospho-alpha-D-ribose 1-diphosphate + anthranilate. It functions in the pathway amino-acid biosynthesis; L-tryptophan biosynthesis; L-tryptophan from chorismate: step 2/5. Catalyzes the transfer of the phosphoribosyl group of 5-phosphorylribose-1-pyrophosphate (PRPP) to anthranilate to yield N-(5'-phosphoribosyl)-anthranilate (PRA). In Leifsonia xyli subsp. xyli (strain CTCB07), this protein is Anthranilate phosphoribosyltransferase.